The sequence spans 271 residues: Putative phosphoenolpyruvate synthase regulatory protein (271 aa).

151–158 (GVSRSGKT) is an ADP binding site.

Belongs to the pyruvate, phosphate/water dikinase regulatory protein family. PSRP subfamily.

It carries out the reaction [pyruvate, water dikinase] + ADP = [pyruvate, water dikinase]-phosphate + AMP + H(+). The catalysed reaction is [pyruvate, water dikinase]-phosphate + phosphate + H(+) = [pyruvate, water dikinase] + diphosphate. Its function is as follows. Bifunctional serine/threonine kinase and phosphorylase involved in the regulation of the phosphoenolpyruvate synthase (PEPS) by catalyzing its phosphorylation/dephosphorylation. This is Putative phosphoenolpyruvate synthase regulatory protein from Burkholderia lata (strain ATCC 17760 / DSM 23089 / LMG 22485 / NCIMB 9086 / R18194 / 383).